A 230-amino-acid chain; its full sequence is Lactate utilization protein C (230 aa).

The protein belongs to the LutC/YkgG family.

Its function is as follows. Is involved in L-lactate degradation and allows cells to grow with lactate as the sole carbon source. The sequence is that of Lactate utilization protein C from Halalkalibacterium halodurans (strain ATCC BAA-125 / DSM 18197 / FERM 7344 / JCM 9153 / C-125) (Bacillus halodurans).